The chain runs to 213 residues: Imidazole glycerol phosphate synthase subunit HisH (213 aa).

The region spanning 4 to 211 (NLGLIDYGMG…LTWLRNGAEP (208 aa)) is the Glutamine amidotransferase type-1 domain. Cys-82 (nucleophile) is an active-site residue. Active-site residues include His-186 and Glu-188.

As to quaternary structure, heterodimer of HisH and HisF.

The protein resides in the cytoplasm. It carries out the reaction 5-[(5-phospho-1-deoxy-D-ribulos-1-ylimino)methylamino]-1-(5-phospho-beta-D-ribosyl)imidazole-4-carboxamide + L-glutamine = D-erythro-1-(imidazol-4-yl)glycerol 3-phosphate + 5-amino-1-(5-phospho-beta-D-ribosyl)imidazole-4-carboxamide + L-glutamate + H(+). The enzyme catalyses L-glutamine + H2O = L-glutamate + NH4(+). Its pathway is amino-acid biosynthesis; L-histidine biosynthesis; L-histidine from 5-phospho-alpha-D-ribose 1-diphosphate: step 5/9. Its function is as follows. IGPS catalyzes the conversion of PRFAR and glutamine to IGP, AICAR and glutamate. The HisH subunit catalyzes the hydrolysis of glutamine to glutamate and ammonia as part of the synthesis of IGP and AICAR. The resulting ammonia molecule is channeled to the active site of HisF. The polypeptide is Imidazole glycerol phosphate synthase subunit HisH (Synechococcus sp. (strain CC9605)).